A 536-amino-acid polypeptide reads, in one-letter code: CTP synthase (536 aa).

The interval 1-267 (MTKYIFVTGG…DQIVCDHLKL (267 aa)) is amidoligase domain. Position 13 (Ser-13) interacts with CTP. Ser-13 lines the UTP pocket. 14 to 19 (SIGKGI) provides a ligand contact to ATP. Tyr-54 lines the L-glutamine pocket. Asp-71 contributes to the ATP binding site. Positions 71 and 141 each coordinate Mg(2+). CTP-binding positions include 148–150 (DIE), 188–193 (KTKPTQ), and Lys-224. UTP contacts are provided by residues 188–193 (KTKPTQ) and Lys-224. The 244-residue stretch at 292–535 (KIALVGKYVE…ITAAVENSQA (244 aa)) folds into the Glutamine amidotransferase type-1 domain. Position 354 (Gly-354) interacts with L-glutamine. Cys-381 serves as the catalytic Nucleophile; for glutamine hydrolysis. L-glutamine contacts are provided by residues 382-385 (LGMQ), Glu-405, and Arg-463. Residues His-508 and Glu-510 contribute to the active site.

The protein belongs to the CTP synthase family. As to quaternary structure, homotetramer.

The catalysed reaction is UTP + L-glutamine + ATP + H2O = CTP + L-glutamate + ADP + phosphate + 2 H(+). The enzyme catalyses L-glutamine + H2O = L-glutamate + NH4(+). It catalyses the reaction UTP + NH4(+) + ATP = CTP + ADP + phosphate + 2 H(+). It functions in the pathway pyrimidine metabolism; CTP biosynthesis via de novo pathway; CTP from UDP: step 2/2. Its activity is regulated as follows. Allosterically activated by GTP, when glutamine is the substrate; GTP has no effect on the reaction when ammonia is the substrate. The allosteric effector GTP functions by stabilizing the protein conformation that binds the tetrahedral intermediate(s) formed during glutamine hydrolysis. Inhibited by the product CTP, via allosteric rather than competitive inhibition. Its function is as follows. Catalyzes the ATP-dependent amination of UTP to CTP with either L-glutamine or ammonia as the source of nitrogen. Regulates intracellular CTP levels through interactions with the four ribonucleotide triphosphates. The polypeptide is CTP synthase (Streptococcus mutans serotype c (strain ATCC 700610 / UA159)).